A 710-amino-acid chain; its full sequence is DNA ligase (710 aa).

The disordered stretch occupies residues 1–36 (MTSSSPRHADPDENPYVEAPPTDFEPVGALSEDEAT). NAD(+) contacts are provided by residues 63–67 (DETYD), 111–112 (SI), and Glu-147. The active-site N6-AMP-lysine intermediate is the Lys-149. The NAD(+) site is built by Arg-170, Glu-206, and Lys-353. The Zn(2+) site is built by Cys-444, Cys-447, Cys-460, and Cys-466. The BRCT domain maps to 623–710 (ETGDALDGLT…ERGVAWPPEE (88 aa)). The disordered stretch occupies residues 657 to 689 (ATSSVSGNTDYLVAGESPGRSKRDDADAEGVPV).

The protein belongs to the NAD-dependent DNA ligase family. LigA subfamily. Mg(2+) serves as cofactor. The cofactor is Mn(2+).

It carries out the reaction NAD(+) + (deoxyribonucleotide)n-3'-hydroxyl + 5'-phospho-(deoxyribonucleotide)m = (deoxyribonucleotide)n+m + AMP + beta-nicotinamide D-nucleotide.. DNA ligase that catalyzes the formation of phosphodiester linkages between 5'-phosphoryl and 3'-hydroxyl groups in double-stranded DNA using NAD as a coenzyme and as the energy source for the reaction. It is essential for DNA replication and repair of damaged DNA. This chain is DNA ligase, found in Halorubrum lacusprofundi (strain ATCC 49239 / DSM 5036 / JCM 8891 / ACAM 34).